Reading from the N-terminus, the 176-residue chain is Lipoprotein signal peptidase (176 aa).

4 helical membrane-spanning segments follow: residues 26 to 46 (LWLA…IVIV), 57 to 77 (VTGF…SFLA), 82 to 102 (WQRW…VWLL), and 111 to 131 (FCFA…DRVI). Residues D137 and D155 contribute to the active site. The chain crosses the membrane as a helical span at residues 147-167 (HWPAFNVADCAITVGAVLLIV).

Belongs to the peptidase A8 family.

It localises to the cell inner membrane. It carries out the reaction Release of signal peptides from bacterial membrane prolipoproteins. Hydrolyzes -Xaa-Yaa-Zaa-|-(S,diacylglyceryl)Cys-, in which Xaa is hydrophobic (preferably Leu), and Yaa (Ala or Ser) and Zaa (Gly or Ala) have small, neutral side chains.. Its pathway is protein modification; lipoprotein biosynthesis (signal peptide cleavage). In terms of biological role, this protein specifically catalyzes the removal of signal peptides from prolipoproteins. This Cupriavidus taiwanensis (strain DSM 17343 / BCRC 17206 / CCUG 44338 / CIP 107171 / LMG 19424 / R1) (Ralstonia taiwanensis (strain LMG 19424)) protein is Lipoprotein signal peptidase.